Here is a 160-residue protein sequence, read N- to C-terminus: MGGGDYWPIIIRHCCFYLVFSIAFVGYIVFAYYKNLHLNTTMKLIALLCILIWLSQPGLNRPLSIFYMKQNLPRTYTPPIRELEYWCTYGKHCDFCWECRNGICKNKVWDDMPLIKQNDYISQCSIARYFDRCMYFIKPKTPYIHYMDCSQPTAYKGFSH.

A run of 2 helical transmembrane segments spans residues 13 to 33 and 35 to 55; these read HCCFYLVFSIAFVGYIVFAYY and NLHLNTTMKLIALLCILIWLS.

Belongs to the asfivirus MGF 110 family.

It is found in the host membrane. Functionally, plays a role in virus cell tropism, and may be required for efficient virus replication in macrophages. The chain is Protein MGF 110-13L from Ornithodoros (relapsing fever ticks).